The sequence spans 343 residues: Galactoside alpha-(1,2)-fucosyltransferase 2 (343 aa).

Topologically, residues 1 to 14 are cytoplasmic; that stretch reads MLVVQMPFSFPMAH. A helical; Signal-anchor for type II membrane protein transmembrane segment spans residues 15 to 28; the sequence is FILFVFTVSTIFHV. The Lumenal portion of the chain corresponds to 29-343; it reads QQRLAKIQAM…AADLSPLLKH (315 aa). Asn-188, Asn-282, and Asn-308 each carry an N-linked (GlcNAc...) asparagine glycan.

The protein belongs to the glycosyltransferase 11 family.

It localises to the golgi apparatus. Its subcellular location is the golgi stack membrane. It carries out the reaction a beta-D-galactosyl-(1-&gt;3)-N-acetyl-beta-D-glucosaminyl derivative + GDP-beta-L-fucose = an alpha-L-Fuc-(1-&gt;2)-beta-D-Gal-(1-&gt;3)-beta-D-GlcNAc derivative + GDP + H(+). It catalyses the reaction a beta-D-galactosyl-(1-&gt;4)-N-acetyl-beta-D-glucosaminyl derivative + GDP-beta-L-fucose = an alpha-L-Fuc-(1-&gt;2)-beta-D-Gal-(1-&gt;4)-beta-D-GlcNAc derivative + GDP + H(+). The catalysed reaction is a neolactoside nLc4Cer + GDP-beta-L-fucose = a neolactoside IV(2)-alpha-Fuc-nLc4Cer + GDP + H(+). The enzyme catalyses a neolactoside nLc4Cer(d18:1(4E)) + GDP-beta-L-fucose = a neolactoside IV(2)-alpha-Fuc-nLc4Cer(d18:1(4E)) + GDP + H(+). It carries out the reaction a ganglioside GM1 + GDP-beta-L-fucose = a ganglioside Fuc-GM1 + GDP + H(+). It catalyses the reaction a ganglioside GA1 + GDP-beta-L-fucose = a ganglioside Fuc-GA1 + GDP + H(+). The catalysed reaction is Lc4Cer + GDP-beta-L-fucose = alpha-L-fucosyl-(1-&gt;2)-beta-D-galactosyl-(1-&gt;3)-N-acetyl-beta-D-glucosaminyl-(1-&gt;3)-beta-D-galactosyl-(1-&gt;4)-beta-D-glucosyl-(1&lt;-&gt;1')-ceramide + GDP + H(+). The enzyme catalyses a beta-D-Gal-(1-&gt;3)-beta-D-GlcNAc-(1-&gt;3)-beta-D-Gal-(1-&gt;4)-beta-D-Glc-(1&lt;-&gt;1')-Cer(d18:1(4E)) + GDP-beta-L-fucose = alpha-L-fucosyl-(1-&gt;2)- beta-D-galactosyl-(1-&gt;3)-N-acetyl-beta-D-glucosaminyl-(1-&gt;3)-beta-D-galactosyl-(1-&gt;4)-beta-D-glucosyl-(1&lt;-&gt;1')-N-acylsphing-4-enine + GDP + H(+). It carries out the reaction a ganglioside GD1b + GDP-beta-L-fucose = a ganglioside Fuc-GD1b + GDP + H(+). It catalyses the reaction a ganglioside GM1 (d18:1(4E)) + GDP-beta-L-fucose = a ganglioside Fuc-GM1 (d18:1(4E)) + GDP + H(+). The catalysed reaction is a globoside GalGb4Cer (d18:1(4E)) + GDP-beta-L-fucose = a globoside Globo-H (d18:1(4E)) + GDP + H(+). The enzyme catalyses a lactoside III(4)-a-Fuc-Lc4Cer + GDP-beta-L-fucose = a lactoside IV(2),III(4)-a-[Fuc]2-Lc4Cer + GDP + H(+). It carries out the reaction beta-D-galactosyl-(1-&gt;3)-N-acetyl-D-galactosamine + GDP-beta-L-fucose = alpha-L-fucosyl-(1-&gt;2)-beta-D-galactosyl-(1-&gt;3)-N-acetyl-D-galactosamine + GDP + H(+). The protein operates within protein modification; protein glycosylation. Functionally, catalyzes the transfer of L-fucose, from a guanosine diphosphate-beta-L-fucose, to the terminal galactose on both O- and N-linked glycans chains of cell surface glycoproteins and glycolipids and the resulting epitope regulates several processes such as cell-cell interaction including host-microbe interaction, cell surface expression and cell proliferation. Preferentially fucosylates gangliosides GA1 and GM1 in the antrum, cecum and colon and in the female reproductive organs. Fucosylated host glycoproteins or glycolipids mediate interaction with intestinal microbiota influencing its composition. Creates a soluble precursor oligosaccharide FuC-alpha ((1,2)Galbeta-) called the H antigen which is an essential substrate for the final step in the soluble ABO blood group antigen synthesis pathway. The protein is Galactoside alpha-(1,2)-fucosyltransferase 2 of Gorilla gorilla gorilla (Western lowland gorilla).